The following is a 224-amino-acid chain: Synaptonemal complex protein 3 (224 aa).

Coiled-coil stretches lie at residues 63–97 (RVKCAAQRESLERQLQDLTATDNKLSEQKRDWEER) and 137–171 (HDSMNGQFNSLKNNLDELNIEKKQLEVAIADQSST).

In terms of assembly, interacts with gras-1. Interacts with brc-1 and brd-1.

It is found in the chromosome. In terms of biological role, plays a role in early meiotic events; during prophase I contributes to synaptonemal complex (SC) assembly, synapsis and chiasmata formation and stabilization of homologous chromosomes pairing. Required for restricting SC assembly to bridge paired chromosome axes. Required for the timely progression of meiotic crossover recombination. Required for the synapsis checkpoint. This is Synaptonemal complex protein 3 from Caenorhabditis elegans.